The following is a 67-amino-acid chain: Large ribosomal subunit protein bL35 (67 aa).

A compositionally biased stretch (basic residues) spans 1–16 (MPKMKTKSSAKKRFRV). Residues 1–23 (MPKMKTKSSAKKRFRVRPGGTVK) form a disordered region.

This sequence belongs to the bacterial ribosomal protein bL35 family.

The chain is Large ribosomal subunit protein bL35 from Variovorax paradoxus (strain S110).